Here is a 315-residue protein sequence, read N- to C-terminus: ATP synthase gamma chain (315 aa).

It belongs to the ATPase gamma chain family. In terms of assembly, F-type ATPases have 2 components, CF(1) - the catalytic core - and CF(0) - the membrane proton channel. CF(1) has five subunits: alpha(3), beta(3), gamma(1), delta(1), epsilon(1). CF(0) has three main subunits: a, b and c.

It localises to the cellular thylakoid membrane. Produces ATP from ADP in the presence of a proton gradient across the membrane. The gamma chain is believed to be important in regulating ATPase activity and the flow of protons through the CF(0) complex. In Cyanothece sp. (strain PCC 7425 / ATCC 29141), this protein is ATP synthase gamma chain.